Consider the following 135-residue polypeptide: MADITVVNDTGELYNVINQKKSEGYLESELTIISKSKLHLNDLHDSEISLISTSGTFSDRMTKLLTGEDGEHAVLSRYNLAPDELEKYKQLILDDKMLVVAVRDKSSHQEVHENNSAYEEIDITHFAEASKGPKA.

Belongs to the UPF0355 family.

The chain is UPF0355 protein SACOL0457 from Staphylococcus aureus (strain COL).